Reading from the N-terminus, the 577-residue chain is Probable ATP-dependent RNA helicase DDX55 homolog (577 aa).

The short motif at 7–37 is the Q motif element; the sequence is AVATKTYREKLGPEILEVFDKSYKSFTDVQV. The Helicase ATP-binding domain maps to 40 to 218; sequence GTHLLNLSDV…VFGLRNAKQV (179 aa). 53 to 60 is an ATP binding site; it reads SPTGSGKT. The short motif at 166-169 is the DEAD box element; the sequence is DEAD. The Helicase C-terminal domain occupies 231 to 393; it reads TLKNYFVECP…EVKVPTSTSR (163 aa). The interval 508 to 577 is disordered; the sequence is AKEKKRREKE…LSKKEIKDVL (70 aa). Over residues 510–530 the composition is skewed to basic residues; sequence EKKRREKEARKMKRAGGRFKS.

It belongs to the DEAD box helicase family. DDX55/SPB4 subfamily.

The catalysed reaction is ATP + H2O = ADP + phosphate + H(+). Probable ATP-binding RNA helicase. The chain is Probable ATP-dependent RNA helicase DDX55 homolog from Caenorhabditis briggsae.